Here is a 452-residue protein sequence, read N- to C-terminus: UDP-glycosyltransferase 76D1 (452 aa).

Residues Ser269, 329 to 331, 346 to 354, and 368 to 371 each bind UDP-alpha-D-glucose; these read APQ, HGGWNSCLE, and SGDQ.

It belongs to the UDP-glycosyltransferase family.

Its function is as follows. Possesses low quercetin 7-O-glucosyltransferase activity in vitro. This is UDP-glycosyltransferase 76D1 (UGT76D1) from Arabidopsis thaliana (Mouse-ear cress).